A 398-amino-acid chain; its full sequence is Cytochrome b (398 aa).

Transmembrane regions (helical) follow at residues 33–53 (FGSL…FLAM), 77–98 (WLIR…YLHI), 113–133 (WNIG…GYVL), and 178–198 (FFAF…IHLL). His83 and His97 together coordinate heme b. Heme b-binding residues include His182 and His196. An a ubiquinone-binding site is contributed by His201. Transmembrane regions (helical) follow at residues 226-246 (YKDL…SLFA), 288-308 (LGGV…PILH), 320-340 (FTQL…WIGG), and 347-367 (YVVI…FLIP).

Belongs to the cytochrome b family. In terms of assembly, the cytochrome bc1 complex contains 3 respiratory subunits (MT-CYB, CYC1 and UQCRFS1), 2 core proteins (UQCRC1 and UQCRC2) and probably 6 low-molecular weight proteins. The cofactor is heme b.

Its subcellular location is the mitochondrion inner membrane. Functionally, component of the ubiquinol-cytochrome c reductase complex (complex III or cytochrome b-c1 complex) that is part of the mitochondrial respiratory chain. The b-c1 complex mediates electron transfer from ubiquinol to cytochrome c. Contributes to the generation of a proton gradient across the mitochondrial membrane that is then used for ATP synthesis. The protein is Cytochrome b (mt-cyb) of Channa asiatica (Small snakehead).